We begin with the raw amino-acid sequence, 457 residues long: D-hydantoinase (457 aa).

2 residues coordinate Zn(2+): His-57 and His-59. Ser-69 carries the phosphoserine modification. Lys-148 is a Zn(2+) binding site. Lys-148 carries the post-translational modification N6-carboxylysine. Tyr-153 contributes to the substrate binding site. 2 residues coordinate Zn(2+): His-181 and His-237. Residue Thr-286 participates in substrate binding. Asp-313 contacts Zn(2+). Asn-335 contributes to the substrate binding site.

This sequence belongs to the metallo-dependent hydrolases superfamily. Hydantoinase/dihydropyrimidinase family. In terms of assembly, homotetramer. The cofactor is Zn(2+). Post-translationally, carboxylation allows a single lysine to coordinate two zinc ions.

Catalyzes the stereospecific hydrolysis of the cyclic amide bond of D-hydantoin derivatives. This chain is D-hydantoinase (hyuA), found in Rhizobium radiobacter (Agrobacterium tumefaciens).